The following is a 140-amino-acid chain: HTH-type transcriptional regulator LysM (140 aa).

The HTH asnC-type domain maps to 4–67; it reads VDESDLKILE…ELENEIRAIV (64 aa). Positions 23–42 form a DNA-binding region, H-T-H motif; sequence YTSIAKELKISEAAVRKRIE.

As to quaternary structure, homotetramer.

It is found in the cytoplasm. The protein operates within amino-acid biosynthesis; L-lysine biosynthesis via AAA pathway [regulation]. In terms of biological role, in the absence or at low concentrations of lysine, activates the biosynthesis of this amino acid via the alpha-aminoadipate (AAA) pathway. This Sulfurisphaera tokodaii (strain DSM 16993 / JCM 10545 / NBRC 100140 / 7) (Sulfolobus tokodaii) protein is HTH-type transcriptional regulator LysM (lysM).